A 671-amino-acid polypeptide reads, in one-letter code: UvrABC system protein B (671 aa).

The Helicase ATP-binding domain occupies 26–183 (EGLENGLAHQ…RRLSELQYSR (158 aa)). Residue 39–46 (GVTGSGKT) participates in ATP binding. Positions 92 to 115 (YYDYYQPEAYVPSSDTFIEKDASV) match the Beta-hairpin motif. Residues 431 to 593 (QVDDLLSEIR…IIPQGLNKKI (163 aa)) form the Helicase C-terminal domain. The 36-residue stretch at 631–666 (DQKIRELEAKMYTYAQNLEFEQAAELRDQVHQLRQQ) folds into the UVR domain.

Belongs to the UvrB family. In terms of assembly, forms a heterotetramer with UvrA during the search for lesions. Interacts with UvrC in an incision complex.

The protein resides in the cytoplasm. Functionally, the UvrABC repair system catalyzes the recognition and processing of DNA lesions. A damage recognition complex composed of 2 UvrA and 2 UvrB subunits scans DNA for abnormalities. Upon binding of the UvrA(2)B(2) complex to a putative damaged site, the DNA wraps around one UvrB monomer. DNA wrap is dependent on ATP binding by UvrB and probably causes local melting of the DNA helix, facilitating insertion of UvrB beta-hairpin between the DNA strands. Then UvrB probes one DNA strand for the presence of a lesion. If a lesion is found the UvrA subunits dissociate and the UvrB-DNA preincision complex is formed. This complex is subsequently bound by UvrC and the second UvrB is released. If no lesion is found, the DNA wraps around the other UvrB subunit that will check the other stand for damage. The sequence is that of UvrABC system protein B from Yersinia pestis bv. Antiqua (strain Antiqua).